A 343-amino-acid chain; its full sequence is Matrix protein (343 aa).

The protein belongs to the morbillivirus/respirovirus/rubulavirus M protein family. In terms of assembly, homodimer. Dimerization is critical for virion formation. Interacts with host ANP32B.

The protein localises to the virion. The protein resides in the host cell membrane. Functionally, the M protein has a crucial role in virus assembly and interacts with the RNP complex as well as with the viral membrane. Associates with phosphatidylserine (PS) and phosphatidylinositol 4,5-bisphosphate (PIP2) at the plasma membrane. Interaction with PIP2 triggers matrix protein lattice polymerization. Matrix proteins induce host membrane deformation and curvature necessary for virion assembly/budding. This Measles virus (strain Biken) (MeV) protein is Matrix protein (M).